The chain runs to 441 residues: Probable acetylornithine aminotransferase, mitochondrial (441 aa).

Lysine 294 carries the post-translational modification N6-(pyridoxal phosphate)lysine.

It belongs to the class-III pyridoxal-phosphate-dependent aminotransferase family. Pyridoxal 5'-phosphate is required as a cofactor.

Its subcellular location is the mitochondrion matrix. The enzyme catalyses N(2)-acetyl-L-ornithine + 2-oxoglutarate = N-acetyl-L-glutamate 5-semialdehyde + L-glutamate. The protein operates within amino-acid biosynthesis; L-arginine biosynthesis; N(2)-acetyl-L-ornithine from L-glutamate: step 4/4. This is Probable acetylornithine aminotransferase, mitochondrial (arg1) from Schizosaccharomyces pombe (strain 972 / ATCC 24843) (Fission yeast).